Reading from the N-terminus, the 417-residue chain is NADH-quinone oxidoreductase subunit D (417 aa).

Belongs to the complex I 49 kDa subunit family. As to quaternary structure, NDH-1 is composed of 14 different subunits. Subunits NuoB, C, D, E, F, and G constitute the peripheral sector of the complex.

Its subcellular location is the cell inner membrane. The catalysed reaction is a quinone + NADH + 5 H(+)(in) = a quinol + NAD(+) + 4 H(+)(out). Functionally, NDH-1 shuttles electrons from NADH, via FMN and iron-sulfur (Fe-S) centers, to quinones in the respiratory chain. The immediate electron acceptor for the enzyme in this species is believed to be ubiquinone. Couples the redox reaction to proton translocation (for every two electrons transferred, four hydrogen ions are translocated across the cytoplasmic membrane), and thus conserves the redox energy in a proton gradient. This is NADH-quinone oxidoreductase subunit D from Paraburkholderia phymatum (strain DSM 17167 / CIP 108236 / LMG 21445 / STM815) (Burkholderia phymatum).